The sequence spans 379 residues: Stimulator of interferon genes protein (379 aa).

Topologically, residues 1–17 (MPHSSLHPSIPCPRGHG) are cytoplasmic. Residues 1–190 (MPHSSLHPSI…TYNQHYNNLL (190 aa)) form a mediates interaction with ZDHHC1 and ZDHHC11 region. The chain crosses the membrane as a helical span at residues 18-34 (AQKAALVLLSACLVTLW). Residue Lys20 forms a Glycyl lysine isopeptide (Lys-Gly) (interchain with G-Cter in ubiquitin) linkage. At 35–44 (GLGEPPEHTL) the chain is on the lumenal side. A helical transmembrane segment spans residues 45–69 (RYLVLHLASLQLGLLLNGVCSLAEE). Residues 70–91 (LRHIHSRYRGSYWRTVRACLGC) are Cytoplasmic-facing. Residues Cys88 and Cys91 are each lipidated (S-palmitoyl cysteine). The chain crosses the membrane as a helical span at residues 92 to 106 (PLRRGALLLLSIYFY). The Lumenal portion of the chain corresponds to 107–116 (YSLPNAVGPP). A helical membrane pass occupies residues 117-134 (FTWMLALLGLSQALNILL). Topologically, residues 135–379 (GLKGLAPAEI…KPLPLRTDFS (245 aa)) are cytoplasmic. Lys150 participates in a covalent cross-link: Glycyl lysine isopeptide (Lys-Gly) (interchain with G-Cter in ubiquitin). Residues 153–340 (FNVAHGLAWS…RHLRQEEKEE (188 aa)) are cyclic dinucleotide-binding domain (CBD). Residues Ser162 and Tyr167 each contribute to the 2',3'-cGAMP site. Residues Ser162 and Tyr167 each contribute to the 3',3'-c-di-GMP site. Tyr167 is a binding site for 2',3'-cUAMP. Position 229 is a phosphothreonine (Thr229). Lys236 participates in a covalent cross-link: Glycyl lysine isopeptide (Lys-Gly) (interchain with G-Cter in ubiquitin). Arg238 contacts 2',3'-cGAMP. Position 238 (Arg238) interacts with 2',3'-cUAMP. 3',3'-c-di-GMP contacts are provided by residues 238-241 (RVYS) and Thr263. Phosphoserine is present on Ser241. 2',3'-cGAMP is bound at residue Thr263. Residue Thr263 coordinates 2',3'-cUAMP. Lys338 participates in a covalent cross-link: Glycyl lysine isopeptide (Lys-Gly) (interchain with G-Cter in SUMO). A C-terminal tail (CTT) region spans residues 340–379 (EVTVGSLKTSAVPSTSTMSQEPELLISGMEKPLPLRTDFS). The tract at residues 341–370 (VTVGSLKTSAVPSTSTMSQEPELLISGMEK) is disordered. A compositionally biased stretch (polar residues) spans 345-359 (SLKTSAVPSTSTMSQ). Thr354 carries the phosphothreonine modification. Ser355 is subject to Phosphoserine; by MAP3K7. Thr356 is subject to Phosphothreonine. 2 positions are modified to phosphoserine; by TBK1: Ser358 and Ser366. A pLxIS motif motif is present at residues 363 to 366 (LLIS).

The protein belongs to the STING family. In terms of assembly, homodimer; forms a homodimer in absence of cyclic nucleotide (c-di-GMP or cGAMP); 'Lys-63'-linked ubiquitination at Lys-150 is required for homodimerization. Homotetramer; in presence of cyclic nucleotide (c-di-GMP or cGAMP), forms tetramers and higher-order oligomers through side-by-side packing. Interacts (when phosphorylated) with IRF3; following activation and phosphorylation on the pLxIS motif by TBK1, recruits IRF3. Interacts with RIGI, MAVS and SSR2. Interacts with RNF5 and TRIM56. Interacts with TBK1; when homodimer, leading to subsequent production of IFN-beta. Interacts with IFIT1 and IFIT2. Interacts with TRIM29; this interaction induces STING1 ubiquitination and subsequent degradation. Associates with the MHC-II complex. Interacts with STEEP1; interaction takes place upon cGAMP-activation and STING1 phosphorylation by MAP3K7/TAK1 and promotes STING1 translocation to COPII vesicles. Interacts with SEC24A, SEC24B, and SEC24C; promoting translocation to COPII vesicles. Interacts (when ubiquitinated) with SQSTM1; leading to relocalization to autophagosomes. Interacts with SURF4. Interacts with HNRNPA2B1. Interacts with ZDHHC1; ZDHHC1 constitutively interacts with STING1 and in presence of DNA viruses activates it by promoting its cGAMP-induced oligomerization and the recruitment of downstream signaling components. Interacts with ZDHHC11; in presence of DNA viruses promotes the recruitment of IRF3 to STING1. Interacts with TOMM70. Interacts with isoform IFI16-beta of IFI16. Interacts with TAB1; promoting recruitment of TAB1 to the endoplasmic reticulum membrane and subsequent activation of MAP3K7/TAK1. Interacts (via transmembrane domain) with TMEM203. Interacts with DDX41. Interacts with TMEM120A (via C-terminal domain); regulates the trafficking of STING1 from the ER to the ER-Golgi intermediate compartment to elicit antiviral effects. As to quaternary structure, (Microbial infection) Interacts with human papillomavirus (HPV) protein E7. (Microbial infection) Interacts with adenovirus early E1A protein. In terms of assembly, (Microbial infection) Interacts with herpes simplex virus 1 protein ICP34.5; this interaction inhibits the intracellular DNA sensing pathway. As to quaternary structure, (Microbial infection) Interacts with Chikungunya virus non-structural protein 1; this interaction results in inhibition of cGAS-STING signaling and increased levels of palmitoylated nsP1 and protein stabilization. (Microbial infection) Interacts with human cytomegalovirus proteins UL94, UL42 and UL138; these interactions result in the inhibition of cGAS-STING signaling. In terms of assembly, (Microbial infection) Interacts with varivella virus protein 39; this interaction results in the inhibition of cGAS-STING signaling. Phosphorylation by TBK1 leads to activation and production of IFN-beta. Following cyclic nucleotide (c-di-GMP or cGAMP)-binding, activation and translocation from the endoplasmic reticulum, STING1 is phosphorylated by TBK1 at Ser-366 in the pLxIS motif. The phosphorylated pLxIS motif constitutes an IRF3-binding motif, leading to recruitment of the transcription factor IRF3 to induce type-I interferons and other cytokines. The phosphorylated pLxIS motif facilitates SENP2 recruitment during late phase of viral infection. Phosphorylated on tyrosine residues upon MHC-II aggregation. Dephosphorylation by PPP6C leads to inactivation and decreased production of IFN-beta. Phosphorylation at Ser-358 is also required to activate IRF3. Phosphorylation at Ser-355 by MAP3K7/TAK1 facilitates its interaction with STEEP1, promoting STING1 translocation to COPII vesicles. In terms of processing, ubiquitinated. Ubiquitinated via 'Lys-63'-linked ubiquitin chains in response to double-stranded DNA treatment, leading to relocalization to autophagosomes and subsequent degradation; this process is dependent on SQSTM1. 'Lys-63'-linked ubiquitination mediated by TRIM56 at Lys-150 promotes homodimerization and recruitment of the antiviral kinase TBK1 and subsequent production of IFN-beta. 'Lys-48'-linked polyubiquitination at Lys-150 occurring after viral infection is mediated by RNF5 and leads to proteasomal degradation. 'Lys-11'-linked polyubiquitination at Lys-150 by RNF26 leads to stabilize STING1: it protects STING1 from RNF5-mediated 'Lys-48'-linked polyubiquitination. 'Lys-33'-linked and 'Lys-48'-linked deubiquitinated by USP20; leading to its stabilization and promotion of innate antiviral response. 'Lys-48'-linked deubiquitinated by USP44; leading to its stabilization and promotion of innate antiviral response. Deubiquitinated by USP13; leading to inhibition of innate antiviral response. 'Lys-63'-linked deubiquitinated by USP49; leading to inhibition of the subsequent recruitment of TBK1 to the signaling complex. 'Lys-63'-linked ubiquitination mediated by RNF39 promotes the activation of the cGAS-STING pathway. MARCHF5-mediated ubiquitination prevents the oxidation-induced polymer formation. Post-translationally, (Microbial infection) Deubiquitinated by Epstein-Barr virus BPLF1 on both 'Lys-48' and 'Lys-63'-linked ubiquitin chains; leading to inhibition of cGAS-STING signaling. Sumoylated at Lys-338 by TRIM38 during the early phase of viral infection, promoting its stability by preventing its relocalization to autophagosomes and subsequent degradation. Desumoylated by SENP2 during the late phase of viral infection. In terms of processing, palmitoylation takes place in the Golgi apparatus and creates a platform for the recruitment of TBK1. In terms of tissue distribution, ubiquitously expressed. Expressed in skin endothelial cells, alveolar type 2 pneumocytes, bronchial epithelium and alveolar macrophages.

The protein localises to the endoplasmic reticulum membrane. The protein resides in the cytoplasm. It localises to the perinuclear region. Its subcellular location is the endoplasmic reticulum-Golgi intermediate compartment membrane. It is found in the golgi apparatus membrane. The protein localises to the cytoplasmic vesicle. The protein resides in the autophagosome membrane. It localises to the mitochondrion outer membrane. Its subcellular location is the cell membrane. It carries out the reaction H(+)(in) = H(+)(out). With respect to regulation, activated upon binding to the hydrolysis-resistant 2'3'-cG(s)A(s)MP, an analog of cGAMP, in which phosphodiester linkages are replaced by phosphothioate linkages. Specifically inhibited by small-molecule H-151 (N-(4-ethylphenyl)-N'-1H-indol-3-yl-urea), which covalently binds Cys-91 and prevents palmitoylation and subsequent activation of STING1. In contrast to mouse protein, not activated by anticancer molecule 5,6-dimethylxanthenone 4-acetic acid (DMXAA). Inhibited by compound 18 ([(3S,4S)-2-(4-tert-butyl-3-chlorophenyl)-3-(2,3-dihydro-1,4-benzodioxin-6-yl)-7-fluoro-1-oxo-1,2,3,4-tetrahydroisoquinolin-4-yl]acetate), a competitive inhibitor with slow dissociation kinetics and good oral bioavailability. Homooligomerization and ability to promote the production of type I interferons is activated by C53, a small benzothiazinone-like compound that binds to the transmembrane regions. in the area of the putative pore. In contrast, compound C53, directly inhibits the proton channel activity and facilitate MAP1LC3B/LC3B lipidation and autophagosome formation. Its function is as follows. Facilitator of innate immune signaling that acts as a sensor of cytosolic DNA from bacteria and viruses and promotes the production of type I interferon (IFN-alpha and IFN-beta). Innate immune response is triggered in response to non-CpG double-stranded DNA from viruses and bacteria delivered to the cytoplasm. Acts by binding cyclic dinucleotides: recognizes and binds cyclic di-GMP (c-di-GMP), a second messenger produced by bacteria, cyclic UMP-AMP (2',3'-cUAMP), and cyclic GMP-AMP (cGAMP), a messenger produced by CGAS in response to DNA virus in the cytosol. Upon binding to c-di-GMP, cUAMP or cGAMP, STING1 oligomerizes, translocates from the endoplasmic reticulum and is phosphorylated by TBK1 on the pLxIS motif, leading to recruitment and subsequent activation of the transcription factor IRF3 to induce expression of type I interferon and exert a potent anti-viral state. Exhibits 2',3' phosphodiester linkage-specific ligand recognition: can bind both 2'-3' linked cGAMP (2'-3'-cGAMP) and 3'-3' linked cGAMP but is preferentially activated by 2'-3' linked cGAMP. The preference for 2'-3'-cGAMP, compared to other linkage isomers is probably due to the ligand itself, whichs adopts an organized free-ligand conformation that resembles the STING1-bound conformation and pays low energy costs in changing into the active conformation. In addition to promote the production of type I interferons, plays a direct role in autophagy. Following cGAMP-binding, STING1 buds from the endoplasmic reticulum into COPII vesicles, which then form the endoplasmic reticulum-Golgi intermediate compartment (ERGIC). The ERGIC serves as the membrane source for WIPI2 recruitment and LC3 lipidation, leading to formation of autophagosomes that target cytosolic DNA or DNA viruses for degradation by the lysosome. Promotes autophagy by acting as a proton channel that directs proton efflux from the Golgi to facilitate MAP1LC3B/LC3B lipidation. The autophagy- and interferon-inducing activities can be uncoupled and autophagy induction is independent of TBK1 phosphorylation. Autophagy is also triggered upon infection by bacteria: following c-di-GMP-binding, which is produced by live Gram-positive bacteria, promotes reticulophagy. May be involved in translocon function, the translocon possibly being able to influence the induction of type I interferons. May be involved in transduction of apoptotic signals via its association with the major histocompatibility complex class II (MHC-II). In terms of biological role, (Microbial infection) Antiviral activity is antagonized by oncoproteins, such as papillomavirus (HPV) protein E7 and adenovirus early E1A protein. Such oncoproteins prevent the ability to sense cytosolic DNA. This is Stimulator of interferon genes protein from Homo sapiens (Human).